The primary structure comprises 45 residues: DNA-directed RNA polymerase subunit Rpo12 (45 aa).

3 residues coordinate Zn(2+): Cys8, Cys23, and Cys26.

The protein belongs to the archaeal Rpo12/eukaryotic RPC10 RNA polymerase subunit family. Part of the RNA polymerase complex. Requires Zn(2+) as cofactor.

It is found in the cytoplasm. The enzyme catalyses RNA(n) + a ribonucleoside 5'-triphosphate = RNA(n+1) + diphosphate. Its function is as follows. DNA-dependent RNA polymerase (RNAP) catalyzes the transcription of DNA into RNA using the four ribonucleoside triphosphates as substrates. The polypeptide is DNA-directed RNA polymerase subunit Rpo12 (Methanocella arvoryzae (strain DSM 22066 / NBRC 105507 / MRE50)).